A 236-amino-acid polypeptide reads, in one-letter code: Probable 2-phosphosulfolactate phosphatase (236 aa).

Belongs to the ComB family. Mg(2+) serves as cofactor.

The enzyme catalyses (2R)-O-phospho-3-sulfolactate + H2O = (2R)-3-sulfolactate + phosphate. The chain is Probable 2-phosphosulfolactate phosphatase from Gloeobacter violaceus (strain ATCC 29082 / PCC 7421).